The following is a 209-amino-acid chain: Octanoyltransferase (209 aa).

The BPL/LPL catalytic domain occupies 29–209 (EHTPDELWVV…CHQLQPEIDS (181 aa)). Substrate is bound by residues 71–78 (RGGQVTYH), 138–140 (SLG), and 151–153 (GLA). Catalysis depends on cysteine 169, which acts as the Acyl-thioester intermediate.

Belongs to the LipB family.

It is found in the cytoplasm. It catalyses the reaction octanoyl-[ACP] + L-lysyl-[protein] = N(6)-octanoyl-L-lysyl-[protein] + holo-[ACP] + H(+). It functions in the pathway protein modification; protein lipoylation via endogenous pathway; protein N(6)-(lipoyl)lysine from octanoyl-[acyl-carrier-protein]: step 1/2. Its function is as follows. Catalyzes the transfer of endogenously produced octanoic acid from octanoyl-acyl-carrier-protein onto the lipoyl domains of lipoate-dependent enzymes. Lipoyl-ACP can also act as a substrate although octanoyl-ACP is likely to be the physiological substrate. The polypeptide is Octanoyltransferase (Hydrogenovibrio crunogenus (strain DSM 25203 / XCL-2) (Thiomicrospira crunogena)).